Reading from the N-terminus, the 37-residue chain is Large ribosomal subunit protein bL36 (37 aa).

Belongs to the bacterial ribosomal protein bL36 family.

This chain is Large ribosomal subunit protein bL36, found in Parasynechococcus marenigrum (strain WH8102).